Consider the following 638-residue polypeptide: Factor of DNA methylation 3 (638 aa).

Residues 318-497 adopt a coiled-coil conformation; sequence FNRIFADHEK…RALISNLRDM (180 aa).

Its function is as follows. Acts in association with FDM4 and FDM5 for RNA-directed DNA methylation (RdDM). This Arabidopsis thaliana (Mouse-ear cress) protein is Factor of DNA methylation 3.